Consider the following 336-residue polypeptide: tRNA N6-adenosine threonylcarbamoyltransferase (336 aa).

Fe cation contacts are provided by H114 and H118. Residues 136 to 140 (LVSGG), D169, G182, D186, and N275 contribute to the substrate site. Residue D301 participates in Fe cation binding.

This sequence belongs to the KAE1 / TsaD family. It depends on Fe(2+) as a cofactor.

It is found in the cytoplasm. The catalysed reaction is L-threonylcarbamoyladenylate + adenosine(37) in tRNA = N(6)-L-threonylcarbamoyladenosine(37) in tRNA + AMP + H(+). In terms of biological role, required for the formation of a threonylcarbamoyl group on adenosine at position 37 (t(6)A37) in tRNAs that read codons beginning with adenine. Is involved in the transfer of the threonylcarbamoyl moiety of threonylcarbamoyl-AMP (TC-AMP) to the N6 group of A37, together with TsaE and TsaB. TsaD likely plays a direct catalytic role in this reaction. The polypeptide is tRNA N6-adenosine threonylcarbamoyltransferase (Streptococcus pneumoniae (strain Hungary19A-6)).